Consider the following 132-residue polypeptide: Small ribosomal subunit protein uS8c (132 aa).

The protein belongs to the universal ribosomal protein uS8 family. Part of the 30S ribosomal subunit.

The protein resides in the plastid. It localises to the chloroplast. Its function is as follows. One of the primary rRNA binding proteins, it binds directly to 16S rRNA central domain where it helps coordinate assembly of the platform of the 30S subunit. This Huperzia lucidula (Shining clubmoss) protein is Small ribosomal subunit protein uS8c (rps8).